Consider the following 299-residue polypeptide: Nicotinate-nucleotide pyrophosphorylase [carboxylating] (299 aa).

Positions 8–12 (LLLPP) are important for hexamer formation. Residues R102, 138 to 139 (RK), 160 to 161 (HR), K171, E201, D222, 248 to 250 (SGG), and G270 each bind quinolinate.

The protein belongs to the NadC/ModD family. Hexamer formed by 3 homodimers.

It catalyses the reaction nicotinate beta-D-ribonucleotide + CO2 + diphosphate = quinolinate + 5-phospho-alpha-D-ribose 1-diphosphate + 2 H(+). It functions in the pathway cofactor biosynthesis; NAD(+) biosynthesis; nicotinate D-ribonucleotide from quinolinate: step 1/1. In terms of biological role, involved in the catabolism of quinolinic acid (QA). The polypeptide is Nicotinate-nucleotide pyrophosphorylase [carboxylating] (Sus scrofa (Pig)).